A 260-amino-acid polypeptide reads, in one-letter code: Hemin import ATP-binding protein HmuV (260 aa).

Residues 3 to 239 enclose the ABC transporter domain; the sequence is LHAQQISLSI…QRLSEVYGCD (237 aa). 35–42 lines the ATP pocket; sequence GPNGSGKS.

It belongs to the ABC transporter superfamily. Heme (hemin) importer (TC 3.A.1.14.5) family. As to quaternary structure, the complex is composed of two ATP-binding proteins (HmuV), two transmembrane proteins (HmuU) and a solute-binding protein (HmuT).

The protein localises to the cell inner membrane. Its function is as follows. Part of the ABC transporter complex HmuTUV involved in hemin import. Responsible for energy coupling to the transport system. The protein is Hemin import ATP-binding protein HmuV of Ruegeria sp. (strain TM1040) (Silicibacter sp.).